The following is a 116-amino-acid chain: U16-barytoxin-Tl1c (116 aa).

A signal peptide spans 1–20 (MKTIIVFLSLLVLATKFGDA). Positions 21–76 (NEGVNQEQMKEVIQNEFREDFLNEMAPMSLLQQLEAIESTLLEKEADRNSRQKRCN) are excised as a propeptide. Cystine bridges form between Cys-75–Cys-90, Cys-82–Cys-95, and Cys-89–Cys-110.

Belongs to the neurotoxin 14 (magi-1) family. 06 (ICK-Trit) subfamily. As to expression, expressed by the venom gland.

The protein resides in the secreted. Its function is as follows. Ion channel inhibitor. The protein is U16-barytoxin-Tl1c of Trittame loki (Brush-footed trapdoor spider).